A 514-amino-acid chain; its full sequence is Tryptophan decarboxylase 1 (514 aa).

A serotonin-binding site is contributed by phenylalanine 104. Residues threonine 175 and serine 176 each coordinate pyridoxal 5'-phosphate. Histidine 214 serves as a coordination point for serotonin. Residue threonine 273 coordinates pyridoxal 5'-phosphate. Lysine 330 is subject to N6-(pyridoxal phosphate)lysine. The active-site Proton donor is the tyrosine 359. Residues valine 380 and glycine 381 each coordinate pyridoxal 5'-phosphate.

The protein belongs to the group II decarboxylase family. Forms homodimers. The cofactor is pyridoxal 5'-phosphate.

The catalysed reaction is L-tryptophan + H(+) = tryptamine + CO2. It carries out the reaction 5-hydroxy-L-tryptophan + H(+) = serotonin + CO2. Involved in serotonin biosynthesis. Catalyzes the decarboxylation of L-tryptophan to produce tryptamine, which is converted to serotonin by tryptamine 5-hydroxylase. May play a major role in serotonin biosynthesis during senescence. Accumulation of serotonin attenuates leaf senescence. Catalyzes the decarboxylation of 5-hydroxy-L-tryptophan to produce serotonin. This Oryza sativa subsp. japonica (Rice) protein is Tryptophan decarboxylase 1.